Here is a 402-residue protein sequence, read N- to C-terminus: NADH-quinone oxidoreductase subunit D (402 aa).

It belongs to the complex I 49 kDa subunit family. As to quaternary structure, NDH-1 is composed of 14 different subunits. Subunits NuoB, C, D, E, F, and G constitute the peripheral sector of the complex.

The protein resides in the cell inner membrane. The enzyme catalyses a quinone + NADH + 5 H(+)(in) = a quinol + NAD(+) + 4 H(+)(out). Functionally, NDH-1 shuttles electrons from NADH, via FMN and iron-sulfur (Fe-S) centers, to quinones in the respiratory chain. The immediate electron acceptor for the enzyme in this species is believed to be ubiquinone. Couples the redox reaction to proton translocation (for every two electrons transferred, four hydrogen ions are translocated across the cytoplasmic membrane), and thus conserves the redox energy in a proton gradient. The chain is NADH-quinone oxidoreductase subunit D from Protochlamydia amoebophila (strain UWE25).